Here is a 595-residue protein sequence, read N- to C-terminus: Ketol-acid reductoisomerase, chloroplastic (595 aa).

The transit peptide at 1 to 72 (MAATAATTFS…GGGSALSAQM (72 aa)) directs the protein to the chloroplast. Positions 108–306 (VRGGRNLFPL…ALGSPFTFAT (199 aa)) constitute a KARI N-terminal Rossmann domain. NADP(+)-binding positions include 129–136 (GVIGWGSQ), 162–167 (RKGSNS), and 201–205 (SDSAQ). Histidine 226 is an active-site residue. KARI C-terminal knotted domains are found at residues 307 to 455 (TLEQ…RPAG) and 456 to 592 (DLGP…RPEL). Mg(2+) contacts are provided by aspartate 315, glutamate 319, glutamate 492, and glutamate 496. Serine 518 is a binding site for substrate.

Belongs to the ketol-acid reductoisomerase family. As to quaternary structure, homodimer. Requires Mg(2+) as cofactor.

It localises to the plastid. The protein localises to the chloroplast. It carries out the reaction (2R)-2,3-dihydroxy-3-methylbutanoate + NADP(+) = (2S)-2-acetolactate + NADPH + H(+). The catalysed reaction is (2R,3R)-2,3-dihydroxy-3-methylpentanoate + NADP(+) = (S)-2-ethyl-2-hydroxy-3-oxobutanoate + NADPH + H(+). It functions in the pathway amino-acid biosynthesis; L-isoleucine biosynthesis; L-isoleucine from 2-oxobutanoate: step 2/4. It participates in amino-acid biosynthesis; L-valine biosynthesis; L-valine from pyruvate: step 2/4. In Spinacia oleracea (Spinach), this protein is Ketol-acid reductoisomerase, chloroplastic (AHRI).